The chain runs to 240 residues: Guanine nucleotide exchange factor sopE2 (240 aa).

Residues 78–240 (LTSKTVKDFM…IANKYLQNAS (163 aa)) are GEF catalytic domain.

The protein belongs to the GEF (guanine exchange factor) SopE family.

It localises to the secreted. Activator for CDC42 by directly engaging this Rho GTPase and acting as potent guanine nucleotide exchange factor (GEF). This activation results in actin cytoskeleton rearrangements and stimulates membrane ruffling, promoting bacterial entry into non-phagocytic cells. Also activates NF-kB, p38 and ERK kinases, which are known to be involved in the induction of IL-8 expression. Chaperone InvB is required for secretion, translocation and stabilization of intracellular levels of sopE2. The protein is Guanine nucleotide exchange factor sopE2 (sopE2) of Salmonella typhimurium (strain LT2 / SGSC1412 / ATCC 700720).